The chain runs to 421 residues: UDP-N-acetylglucosamine 1-carboxyvinyltransferase (421 aa).

22-23 lines the phosphoenolpyruvate pocket; it reads KN. Position 92 (R92) interacts with UDP-N-acetyl-alpha-D-glucosamine. The Proton donor role is filled by C116. Position 116 is a 2-(S-cysteinyl)pyruvic acid O-phosphothioketal (C116). Residues 121 to 125, D304, and I326 each bind UDP-N-acetyl-alpha-D-glucosamine; that span reads RPVDQ.

It belongs to the EPSP synthase family. MurA subfamily.

It is found in the cytoplasm. It catalyses the reaction phosphoenolpyruvate + UDP-N-acetyl-alpha-D-glucosamine = UDP-N-acetyl-3-O-(1-carboxyvinyl)-alpha-D-glucosamine + phosphate. It functions in the pathway cell wall biogenesis; peptidoglycan biosynthesis. Cell wall formation. Adds enolpyruvyl to UDP-N-acetylglucosamine. This is UDP-N-acetylglucosamine 1-carboxyvinyltransferase from Bordetella avium (strain 197N).